The sequence spans 301 residues: Tyrosine recombinase XerC (301 aa).

Positions 1–89 constitute a Core-binding (CB) domain; that stretch reads MGLDGLAAYL…SWRQYCVWLV (89 aa). Residues 110-290 enclose the Tyr recombinase domain; that stretch reads RVPKALPQEW…DFDHIARLYD (181 aa). Residues arginine 151, lysine 175, histidine 242, arginine 245, and histidine 268 contribute to the active site. Tyrosine 277 serves as the catalytic O-(3'-phospho-DNA)-tyrosine intermediate.

It belongs to the 'phage' integrase family. XerC subfamily. In terms of assembly, forms a cyclic heterotetrameric complex composed of two molecules of XerC and two molecules of XerD.

Its subcellular location is the cytoplasm. In terms of biological role, site-specific tyrosine recombinase, which acts by catalyzing the cutting and rejoining of the recombining DNA molecules. The XerC-XerD complex is essential to convert dimers of the bacterial chromosome into monomers to permit their segregation at cell division. It also contributes to the segregational stability of plasmids. The polypeptide is Tyrosine recombinase XerC (Neisseria meningitidis serogroup B (strain ATCC BAA-335 / MC58)).